The chain runs to 330 residues: uncharacterized protein (330 aa).

One can recognise an ABC transporter domain in the interval 4 to 242 (LTISDLVVEY…AGEVLFEQST (239 aa)). 40-47 (GPSGCGKT) contacts ATP. Position 210 to 330 (210 to 330 (DRVLELMPAQ…LIEHRELASE (121 aa))) interacts with a nucleoside 3',5'-cyclic phosphate.

It belongs to the ABC transporter superfamily.

This is an uncharacterized protein from Mycobacterium bovis (strain ATCC BAA-935 / AF2122/97).